The primary structure comprises 312 residues: Malate dehydrogenase (312 aa).

NAD(+)-binding positions include 12–17 (GSGFTG) and aspartate 36. Residues arginine 87 and arginine 93 each coordinate substrate. Residues asparagine 100 and 123 to 125 (LTN) contribute to the NAD(+) site. Position 125 (asparagine 125) interacts with substrate. Serine 149 is subject to Phosphoserine. Residue arginine 156 participates in substrate binding. Histidine 180 functions as the Proton acceptor in the catalytic mechanism.

Belongs to the LDH/MDH superfamily. MDH type 3 family.

The enzyme catalyses (S)-malate + NAD(+) = oxaloacetate + NADH + H(+). Its function is as follows. Catalyzes the reversible oxidation of malate to oxaloacetate. In Oceanobacillus iheyensis (strain DSM 14371 / CIP 107618 / JCM 11309 / KCTC 3954 / HTE831), this protein is Malate dehydrogenase.